Consider the following 242-residue polypeptide: Myogenic factor 6 (242 aa).

The segment at 31–63 (SPLYPGSDGTLSPCQDQMPPEAGSDSSGEEHVL) is disordered. The bHLH domain occupies 93–144 (DRRKAATLRERRRLKKINEAFEALKRRTVANPNQRLPKVEILRSAINYIERL).

In terms of assembly, efficient DNA binding requires dimerization with another bHLH protein. Interacts with CSRP3.

The protein localises to the nucleus. Involved in muscle differentiation (myogenic factor). Induces fibroblasts to differentiate into myoblasts. Probable sequence specific DNA-binding protein. The chain is Myogenic factor 6 (MYF6) from Bos taurus (Bovine).